The following is a 256-amino-acid chain: Hydroxyacylglutathione hydrolase (256 aa).

His-56, His-58, Asp-60, His-61, His-114, Asp-133, and His-171 together coordinate Zn(2+).

Belongs to the metallo-beta-lactamase superfamily. Glyoxalase II family. In terms of assembly, monomer. Zn(2+) is required as a cofactor.

The catalysed reaction is an S-(2-hydroxyacyl)glutathione + H2O = a 2-hydroxy carboxylate + glutathione + H(+). It participates in secondary metabolite metabolism; methylglyoxal degradation; (R)-lactate from methylglyoxal: step 2/2. Functionally, thiolesterase that catalyzes the hydrolysis of S-D-lactoyl-glutathione to form glutathione and D-lactic acid. The chain is Hydroxyacylglutathione hydrolase from Rhodobacter capsulatus (Rhodopseudomonas capsulata).